Reading from the N-terminus, the 262-residue chain is 14-3-3-like protein A (262 aa).

Residues 240 to 262 (DNAEEGGDEIKEAASKPEGEGHS) are disordered. Positions 247 to 262 (DEIKEAASKPEGEGHS) are enriched in basic and acidic residues.

This sequence belongs to the 14-3-3 family.

The sequence is that of 14-3-3-like protein A from Hordeum vulgare (Barley).